The chain runs to 536 residues: Bifunctional purine biosynthesis protein PurH (536 aa).

Positions 8–158 (IPAPDEVRIK…KNHAYVTIVT (151 aa)) constitute an MGS-like domain.

Belongs to the PurH family.

The catalysed reaction is (6R)-10-formyltetrahydrofolate + 5-amino-1-(5-phospho-beta-D-ribosyl)imidazole-4-carboxamide = 5-formamido-1-(5-phospho-D-ribosyl)imidazole-4-carboxamide + (6S)-5,6,7,8-tetrahydrofolate. It carries out the reaction IMP + H2O = 5-formamido-1-(5-phospho-D-ribosyl)imidazole-4-carboxamide. Its pathway is purine metabolism; IMP biosynthesis via de novo pathway; 5-formamido-1-(5-phospho-D-ribosyl)imidazole-4-carboxamide from 5-amino-1-(5-phospho-D-ribosyl)imidazole-4-carboxamide (10-formyl THF route): step 1/1. The protein operates within purine metabolism; IMP biosynthesis via de novo pathway; IMP from 5-formamido-1-(5-phospho-D-ribosyl)imidazole-4-carboxamide: step 1/1. In Rhizobium meliloti (strain 1021) (Ensifer meliloti), this protein is Bifunctional purine biosynthesis protein PurH.